The following is a 95-amino-acid chain: MAPAELKRPDLIVPYKARVKANEEVGLSLVSTATCMAALFLRFKLIAWVAFILTFSNLLNANTSPSSSPTSMAFMGIAALVSTYLPQFLNTPNKT.

A helical membrane pass occupies residues 29-53; that stretch reads LVSTATCMAALFLRFKLIAWVAFIL.

It is found in the membrane. This is an uncharacterized protein from Schizosaccharomyces pombe (strain 972 / ATCC 24843) (Fission yeast).